A 371-amino-acid chain; its full sequence is Alanine dehydrogenase (371 aa).

Arg15 and Lys75 together coordinate substrate. His96 (proton donor/acceptor) is an active-site residue. Residues Ser134, 178–179, Asp198, Lys203, Ser220, 239–240, 267–270, Arg279, and 298–301 contribute to the NAD(+) site; these read TA, VL, IAID, and VANM. The active-site Proton donor/acceptor is the Asp270. Mg(2+) is bound by residues Glu323 and His327.

It belongs to the AlaDH/PNT family. Homohexamer. Trimer of dimers. Requires Mg(2+) as cofactor.

Its subcellular location is the secreted. It catalyses the reaction L-alanine + NAD(+) + H2O = pyruvate + NH4(+) + NADH + H(+). It participates in amino-acid degradation; L-alanine degradation via dehydrogenase pathway; NH(3) and pyruvate from L-alanine: step 1/1. Functionally, catalyzes the reversible reductive amination of pyruvate to L-alanine. However, since the physiological environment of M.tuberculosis has a neutral pH, it can be assumed that the enzyme catalyzes exclusively the formation of L-alanine. May play a role in cell wall synthesis as L-alanine is an important constituent of the peptidoglycan layer. This chain is Alanine dehydrogenase (ald), found in Mycobacterium tuberculosis (strain CDC 1551 / Oshkosh).